A 101-amino-acid polypeptide reads, in one-letter code: Protein RnfH (101 aa).

Belongs to the UPF0125 (RnfH) family.

The polypeptide is Protein RnfH (Coxiella burnetii (strain CbuG_Q212) (Coxiella burnetii (strain Q212))).